The sequence spans 67 residues: Sec-independent protein translocase protein TatA (67 aa).

The chain crosses the membrane as a helical span at residues 1-21 (MGSFSLTHWIIVLIIVVLIFG). Positions 43–67 (LNEGTDGKEAQKDDVIEHKKDEDKA) are disordered. Residues 47 to 67 (TDGKEAQKDDVIEHKKDEDKA) show a composition bias toward basic and acidic residues.

The protein belongs to the TatA/E family. In terms of assembly, the Tat system comprises two distinct complexes: a TatABC complex, containing multiple copies of TatA, TatB and TatC subunits, and a separate TatA complex, containing only TatA subunits. Substrates initially bind to the TatABC complex, which probably triggers association of the separate TatA complex to form the active translocon.

It localises to the cell inner membrane. Functionally, part of the twin-arginine translocation (Tat) system that transports large folded proteins containing a characteristic twin-arginine motif in their signal peptide across membranes. TatA could form the protein-conducting channel of the Tat system. The polypeptide is Sec-independent protein translocase protein TatA (Neisseria gonorrhoeae (strain ATCC 700825 / FA 1090)).